The sequence spans 541 residues: Centrosomal protein of 63 kDa (541 aa).

An N-acetylmethionine modification is found at M1. Coiled coils occupy residues 22 to 199 (EAEL…ESVE) and 242 to 305 (MTVL…TQHA). Phosphoserine is present on S278. The tract at residues 294-324 (QEKVKATDTQHAVEAIRPREESPAEKKYTSQ) is disordered. A compositionally biased stretch (basic and acidic residues) spans 307–321 (EAIRPREESPAEKKY). Coiled coils occupy residues 346-485 (LQAE…KLEL) and 514-541 (HILERLDAHIEELKRESEKTVRQFTALK).

This sequence belongs to the CEP63 family. In terms of assembly, interacts with CEP152 and CDK1; these interactions recruit both ligands to centrosomes. Interacts with CDK2, CDK5RAP2, WDR62, CEP90, KIAA0753/moonraker and CCDC14. CEP63, CDK5RAP2, CEP152, WDR62 are proposed to form a stepwise assembled complex at the centrosome forming a ring near parental centrioles. Interacts with CCDC57; the interaction is required for their location to proximal end of centrioles. Interacts with FXR1; promoting its stabilization. Post-translationally, polyubiquitinated via 'Lys-48'-linked ubiquitin, leading to its degradation. Deubiquitinated by USP36, promoting its stabilization.

The protein localises to the cytoplasm. It localises to the cytoskeleton. The protein resides in the microtubule organizing center. Its subcellular location is the centrosome. It is found in the centriole. The protein localises to the centriolar satellite. Required for normal spindle assembly. Plays a key role in mother-centriole-dependent centriole duplication; the function seems also to involve CEP152, CDK5RAP2 and WDR62 through a stepwise assembled complex at the centrosome that recruits CDK2 required for centriole duplication. Reported to be required for centrosomal recruitment of CEP152; however, this function has been questioned. Also recruits CDK1 to centrosomes. Plays a role in DNA damage response. Following DNA damage, such as double-strand breaks (DSBs), is removed from centrosomes; this leads to the inactivation of spindle assembly and delay in mitotic progression. Promotes stabilization of FXR1 protein by inhibiting FXR1 ubiquitination. This Pongo abelii (Sumatran orangutan) protein is Centrosomal protein of 63 kDa (CEP63).